The primary structure comprises 303 residues: Acetaldehyde dehydrogenase 1 (303 aa).

The active-site Acyl-thioester intermediate is C130. NAD(+)-binding positions include 161–169 (SVGPGTRKN) and N272.

Belongs to the acetaldehyde dehydrogenase family.

The catalysed reaction is acetaldehyde + NAD(+) + CoA = acetyl-CoA + NADH + H(+). The polypeptide is Acetaldehyde dehydrogenase 1 (Cupriavidus metallidurans (strain ATCC 43123 / DSM 2839 / NBRC 102507 / CH34) (Ralstonia metallidurans)).